A 168-amino-acid chain; its full sequence is Disulfide bond formation protein B 2 (168 aa).

Residues 1 to 14 lie on the Cytoplasmic side of the membrane; sequence MSAPIGATRAERWT. A helical transmembrane segment spans residues 15-31; that stretch reads LLAIGVASFELVAGALW. At 32–49 the chain is on the periplasmic side; sequence IQLAWQEDPCPLCIIQRY. Cys-41 and Cys-44 are disulfide-bonded. A helical membrane pass occupies residues 50–64; it reads LFLLIALFTFVAAAG. Residues 65–69 are Cytoplasmic-facing; the sequence is GRRVA. Residues 70–87 form a helical membrane-spanning segment; that stretch reads LLRVLSLTTALAGAAVAV. Residues 88–142 are Periplasmic-facing; that stretch reads RHIYVQAHPGFSCGFDALQPVIDSLPPAHWLPPVFKVGGLCETLYPPILGLSLPM. The cysteines at positions 100 and 128 are disulfide-linked. Residues 143–161 traverse the membrane as a helical segment; the sequence is WALVGFSAIAVALGWRIRA. At 162-168 the chain is on the cytoplasmic side; that stretch reads QAVIRTA.

The protein belongs to the DsbB family.

The protein resides in the cell inner membrane. Required for disulfide bond formation in some periplasmic proteins. Acts by oxidizing the DsbA protein. In Burkholderia lata (strain ATCC 17760 / DSM 23089 / LMG 22485 / NCIMB 9086 / R18194 / 383), this protein is Disulfide bond formation protein B 2.